Consider the following 264-residue polypeptide: Tryptophan synthase alpha chain (264 aa).

Catalysis depends on proton acceptor residues glutamate 49 and aspartate 60.

The protein belongs to the TrpA family. As to quaternary structure, tetramer of two alpha and two beta chains.

It catalyses the reaction (1S,2R)-1-C-(indol-3-yl)glycerol 3-phosphate + L-serine = D-glyceraldehyde 3-phosphate + L-tryptophan + H2O. Its pathway is amino-acid biosynthesis; L-tryptophan biosynthesis; L-tryptophan from chorismate: step 5/5. In terms of biological role, the alpha subunit is responsible for the aldol cleavage of indoleglycerol phosphate to indole and glyceraldehyde 3-phosphate. The protein is Tryptophan synthase alpha chain of Geotalea daltonii (strain DSM 22248 / JCM 15807 / FRC-32) (Geobacter daltonii).